Consider the following 565-residue polypeptide: Perivitellin-2 67 kDa subunit (565 aa).

A signal peptide spans 1–26 (MSQLRWWVVSQLLLLIVVCILDHSEG). An MACPF domain is found at 27–340 (ARVCPKIVPG…AKVANLDRLT (314 aa)).

As to quaternary structure, perivitellin-2 is a heterooctamer of 4 identical 98 kDa heterodimers, each composed of one 31 kDa and one 67 kDa subunits. The 98 kDa heterodimer subunits are held together by disulfide bridges while the heterodimers are assembled into the native perivitellin-2 octamer by non-covalent forces. In terms of processing, glycosylated. Contains four O-linked and one N-linked oligosaccharide bonds. The protein contains 2.5% of carbohydrates (high levels of mannose, galactose, and NAcGlucosamine, and small amounts of NacGalactosamine). Post-translationally, PV2 is a very high density lipoprotein (VHDL). It contains 3.75% of lipids. The major lipid classes are free sterols and phospholipids and also have significant quantities of energy-providing triacylglycerides and free fatty acids. Produced by albumen secretory cells. Found in developing eggs.

The protein resides in the secreted. Its subcellular location is the target cell membrane. Its function is as follows. The egg defensive protein perivitellin-2 is a pore-forming two-subunit glycoprotein that affects both the nervous and digestive systems of mammals. In addition, it is a source of both structural and energetic molecules during embryonic development. The tachylectin subunit (31 kDa) binds target membranes while the MACPF subunit (67 kDa) disrupts lipid bilayers forming large pores altering the plasma membrance conductance. Both in vivo and in vitro, the protein shows wide pH range stability and is resistant to enzymatic proteolysis from gastrointestinal environments. It specifically binds mature enterocytes but does not cause cell disruption on caco-2 (human colorectal adenocarcinoma cells) or rat intestinal cells. After oral administration to mice, it binds enterocytes and induces large dose-dependent morphological changes on their small intestine mucosa, reducing the absorptive surface. Additionally, it is detected in the Peyer's patches where it activates lymphoid follicles and triggers apoptosis. The toxin can also traverse the intestinal barrier and induce oral adaptive immunity with evidence of circulating antibody response. The toxin also shows hemagglutination properties thanks to the tachylectin subunit, but does not show hemolytic activity. In addition to enterotoxin activity, the toxin also acts as a neurotoxin, since an intraperitoneal injection induces paralysis of the mice rear limbs, followed by death. The polypeptide is Perivitellin-2 67 kDa subunit (Pomacea canaliculata (Golden apple snail)).